The primary structure comprises 374 residues: Mannitol-1-phosphate 5-dehydrogenase (374 aa).

3-14 (AIHFGAGNIGRG) lines the NAD(+) pocket.

The protein belongs to the mannitol dehydrogenase family.

The enzyme catalyses D-mannitol 1-phosphate + NAD(+) = beta-D-fructose 6-phosphate + NADH + H(+). The protein is Mannitol-1-phosphate 5-dehydrogenase of Halalkalibacterium halodurans (strain ATCC BAA-125 / DSM 18197 / FERM 7344 / JCM 9153 / C-125) (Bacillus halodurans).